Reading from the N-terminus, the 242-residue chain is Small ribosomal subunit protein uS2 (242 aa).

The protein belongs to the universal ribosomal protein uS2 family.

The polypeptide is Small ribosomal subunit protein uS2 (Colwellia psychrerythraea (strain 34H / ATCC BAA-681) (Vibrio psychroerythus)).